Consider the following 270-residue polypeptide: Phosphatidylglycerol--prolipoprotein diacylglyceryl transferase (270 aa).

7 helical membrane passes run 14 to 34 (VAFT…ILAL), 60 to 80 (YFFW…IAIY), 103 to 123 (FVGI…LATI), 133 to 153 (LWQL…FGRI), 181 to 201 (PSQL…LFFY), 209 to 229 (GELI…CEFF), and 235 to 255 (GIGF…LMFF). Arg152 serves as a coordination point for a 1,2-diacyl-sn-glycero-3-phospho-(1'-sn-glycerol).

This sequence belongs to the Lgt family.

The protein localises to the cell inner membrane. It carries out the reaction L-cysteinyl-[prolipoprotein] + a 1,2-diacyl-sn-glycero-3-phospho-(1'-sn-glycerol) = an S-1,2-diacyl-sn-glyceryl-L-cysteinyl-[prolipoprotein] + sn-glycerol 1-phosphate + H(+). It participates in protein modification; lipoprotein biosynthesis (diacylglyceryl transfer). Its function is as follows. Catalyzes the transfer of the diacylglyceryl group from phosphatidylglycerol to the sulfhydryl group of the N-terminal cysteine of a prolipoprotein, the first step in the formation of mature lipoproteins. This chain is Phosphatidylglycerol--prolipoprotein diacylglyceryl transferase, found in Campylobacter curvus (strain 525.92).